The following is a 193-amino-acid chain: Partner of Y14 and mago (193 aa).

Disordered regions lie at residues 1–27 (MSTPTAYEHDADGSKFIPATQRPDGTW) and 118–142 (IQEPTLPSQSVPTESISQSDPTKRL). A compositionally biased stretch (polar residues) spans 122–137 (TLPSQSVPTESISQSD). Positions 139 to 192 (TKRLKNLRKKLREIEFLEEKIKAGLLKSPDKDQKEKMSKKNEILNEIDILKNSI) form a coiled coil.

Belongs to the pym family. In terms of assembly, interacts (via N-terminus) with mago and tsu/Y14; the interaction is direct.

It localises to the cytoplasm. Its subcellular location is the nucleus. Regulator of the exon junction complex (EJC), a multiprotein complex that associates immediately upstream of the exon-exon junction on mRNAs and serves as a positional landmarks for the intron exon structure of genes and directs post-transcriptional processes in the cytoplasm such as mRNA export, nonsense-mediated mRNA decay (NMD) or translation. The sequence is that of Partner of Y14 and mago from Bombyx mori (Silk moth).